The chain runs to 1235 residues: ATP-dependent helicase/nuclease subunit A (1235 aa).

Residues 12–482 (SLWTDDQWKA…IDLSQNFRSR (471 aa)) form the UvrD-like helicase ATP-binding domain. 33-40 (AAAGSGKT) lines the ATP pocket. The 292-residue stretch at 509–800 (AAELTLGANF…RMMTIHASKG (292 aa)) folds into the UvrD-like helicase C-terminal domain.

The protein belongs to the helicase family. AddA subfamily. In terms of assembly, heterodimer of AddA and AddB/RexB. Mg(2+) serves as cofactor.

The catalysed reaction is Couples ATP hydrolysis with the unwinding of duplex DNA by translocating in the 3'-5' direction.. The enzyme catalyses ATP + H2O = ADP + phosphate + H(+). The heterodimer acts as both an ATP-dependent DNA helicase and an ATP-dependent, dual-direction single-stranded exonuclease. Recognizes the chi site generating a DNA molecule suitable for the initiation of homologous recombination. The AddA nuclease domain is required for chi fragment generation; this subunit has the helicase and 3' -&gt; 5' nuclease activities. This chain is ATP-dependent helicase/nuclease subunit A, found in Listeria monocytogenes serovar 1/2a (strain ATCC BAA-679 / EGD-e).